We begin with the raw amino-acid sequence, 566 residues long: Ubiquitin carboxyl-terminal hydrolase 21 (566 aa).

Composition is skewed to basic and acidic residues over residues 1–14 (MPQA…RTRE) and 58–70 (PPDE…ELGR). 2 disordered regions span residues 1-103 (MPQA…LPLP) and 146-169 (PEPP…PPTL). Composition is skewed to low complexity over residues 71–81 (GRTSGSRPRGP) and 151–160 (LRRSTSLRRL). Positions 134–152 (ELGAALSRLALRPEPPTLR) match the Nuclear export signal motif. Residues 212–559 (VGLRNLGNTC…EGYVLFYQLM (348 aa)) form the USP domain. The active-site Nucleophile is cysteine 221. Residues 324 to 349 (APPILASGPVPSPPRRGGGALHEEPE) form a disordered region. Zn(2+)-binding residues include cysteine 385, cysteine 388, cysteine 438, and cysteine 441. The active-site Proton acceptor is histidine 519.

It belongs to the peptidase C19 family. USP21 subfamily. Interacts with BEND3.

The protein resides in the cytoplasm. It localises to the nucleus. It carries out the reaction Thiol-dependent hydrolysis of ester, thioester, amide, peptide and isopeptide bonds formed by the C-terminal Gly of ubiquitin (a 76-residue protein attached to proteins as an intracellular targeting signal).. Its function is as follows. Deubiquitinates histone H2A, a specific tag for epigenetic transcriptional repression, thereby acting as a coactivator. Deubiquitination of histone H2A releaves the repression of di- and trimethylation of histone H3 at 'Lys-4', resulting in regulation of transcriptional initiation. Regulates gene expression via histone H2A deubiquitination. Deubiquitinates BAZ2A/TIP5 leading to its stabilization. Also capable of removing NEDD8 from NEDD8 conjugates but has no effect on Sentrin-1 conjugates. Also acts as a negative regulator of the ribosome quality control (RQC) by mediating deubiquitination of 40S ribosomal proteins RPS10/eS10 and RPS20/uS10, thereby antagonizing ZNF598-mediated 40S ubiquitination. The protein is Ubiquitin carboxyl-terminal hydrolase 21 of Mus musculus (Mouse).